The chain runs to 124 residues: Putative RNA polymerase II transcriptional coactivator (124 aa).

The disordered stretch occupies residues 1–61 (MSSSSSSEDE…GRLKDSDGNE (61 aa)). 2 stretches are compositionally biased toward basic and acidic residues: residues 11-21 (LEKKVTKEQKK) and 39-58 (QEVK…KDSD).

Belongs to the transcriptional coactivator PC4 family.

It localises to the nucleus. General coactivator that functions cooperatively with TAFs and mediates functional interactions between upstream activators and the general transcriptional machinery. Binds single-stranded DNA. In Caenorhabditis elegans, this protein is Putative RNA polymerase II transcriptional coactivator.